The chain runs to 172 residues: Photosystem I assembly protein Ycf3 (172 aa).

TPR repeat units lie at residues 35-68 (AFSY…EVDA), 72-105 (SYIL…NPSL), and 120-153 (GEQA…APTN).

The protein belongs to the Ycf3 family.

It is found in the plastid. Its subcellular location is the chloroplast thylakoid membrane. Essential for the assembly of the photosystem I (PSI) complex. May act as a chaperone-like factor to guide the assembly of the PSI subunits. This chain is Photosystem I assembly protein Ycf3, found in Chlamydomonas reinhardtii (Chlamydomonas smithii).